The primary structure comprises 297 residues: D-aminoacyl-tRNA deacylase (297 aa).

It belongs to the DtdA deacylase family. In terms of assembly, monomer. Requires Zn(2+) as cofactor.

It catalyses the reaction a D-aminoacyl-tRNA + H2O = a tRNA + a D-alpha-amino acid + H(+). It carries out the reaction glycyl-tRNA(Ala) + H2O = tRNA(Ala) + glycine + H(+). Its function is as follows. D-aminoacyl-tRNA deacylase with broad substrate specificity. By recycling D-aminoacyl-tRNA to D-amino acids and free tRNA molecules, this enzyme counteracts the toxicity associated with the formation of D-aminoacyl-tRNA entities in vivo. The sequence is that of D-aminoacyl-tRNA deacylase from Methanosarcina mazei (strain ATCC BAA-159 / DSM 3647 / Goe1 / Go1 / JCM 11833 / OCM 88) (Methanosarcina frisia).